Reading from the N-terminus, the 184-residue chain is GTP cyclohydrolase 1 (184 aa).

Residues Cys75, His78, and Cys146 each contribute to the Zn(2+) site.

This sequence belongs to the GTP cyclohydrolase I family. Homomer.

The catalysed reaction is GTP + H2O = 7,8-dihydroneopterin 3'-triphosphate + formate + H(+). The protein operates within cofactor biosynthesis; 7,8-dihydroneopterin triphosphate biosynthesis; 7,8-dihydroneopterin triphosphate from GTP: step 1/1. This Streptococcus pneumoniae (strain ATCC 700669 / Spain 23F-1) protein is GTP cyclohydrolase 1.